The primary structure comprises 93 residues: Cell division protein CrgA (93 aa).

The next 2 membrane-spanning stretches (helical) occupy residues 31–51 and 70–90; these read VWFVALFIGLMLIGLVWLMVF and LGPWNYAIAFAFMITGLLLTM.

This sequence belongs to the CrgA family.

The protein localises to the cell membrane. Involved in cell division. This chain is Cell division protein CrgA, found in Mycobacterium avium (strain 104).